We begin with the raw amino-acid sequence, 313 residues long: Porphobilinogen deaminase (313 aa).

C242 is modified (S-(dipyrrolylmethanemethyl)cysteine).

The protein belongs to the HMBS family. As to quaternary structure, monomer. The cofactor is dipyrromethane.

The enzyme catalyses 4 porphobilinogen + H2O = hydroxymethylbilane + 4 NH4(+). It participates in porphyrin-containing compound metabolism; protoporphyrin-IX biosynthesis; coproporphyrinogen-III from 5-aminolevulinate: step 2/4. Functionally, tetrapolymerization of the monopyrrole PBG into the hydroxymethylbilane pre-uroporphyrinogen in several discrete steps. In Yersinia pestis bv. Antiqua (strain Angola), this protein is Porphobilinogen deaminase.